Reading from the N-terminus, the 210-residue chain is Thioredoxin-like 3-1, chloroplastic (210 aa).

The Thioredoxin domain occupies 81–210 (WRLKAFWSNI…EVRELINKFV (130 aa)). Active-site nucleophile residues include Cys130 and Cys133. A disulfide bond links Cys130 and Cys133.

The protein belongs to the thioredoxin family.

The protein resides in the plastid. It localises to the chloroplast stroma. Its function is as follows. Probable thiol-disulfide oxidoreductase that may participate in various redox reactions. This is Thioredoxin-like 3-1, chloroplastic (WCRKC1) from Arabidopsis thaliana (Mouse-ear cress).